Here is a 689-residue protein sequence, read N- to C-terminus: Sodium-dependent phosphate transport protein 2B (689 aa).

Positions 1-41 are disordered; the sequence is MAPWPELGDAQPNPDKYLEGAAGQQPTAPDKSKETNKNNTE. Topologically, residues 1 to 100 are cytoplasmic; that stretch reads MAPWPELGDA…LCVFQGIGRL (100 aa). Residues 101-121 traverse the membrane as a helical segment; it reads ILLLGFLYFFVCSLDILSSAF. Residues 122–135 lie on the Extracellular side of the membrane; it reads QLVGGKMAGQFFSN. A helical membrane pass occupies residues 136 to 156; it reads SSIMSNPLLGLVIGVLVTVLV. The Cytoplasmic segment spans residues 157–212; it reads QSSSTSTSIVVSMVSSSLLTVRAAIPIIMGANIGTSITNTIVALMQVGDRSEFRRA. The helical transmembrane segment at 213–233 threads the bilayer; that stretch reads FAGATVHDFFNWLSVLVLLPV. Residues 234–362 lie on the Extracellular side of the membrane; sequence EVATHYLEII…FVNFHLPDLA (129 aa). 3 N-linked (GlcNAc...) asparagine glycosylation sites follow: N294, N307, and N320. The cysteines at positions 302 and 349 are disulfide-linked. Residues 363 to 383 form a helical membrane-spanning segment; the sequence is VGTILLILSLLVLCGCLIMIV. The Cytoplasmic segment spans residues 384 to 407; that stretch reads KILGSVLKGQVATVIKKTINTDFP. Residues 408-428 traverse the membrane as a helical segment; sequence FPFAWLTGYLAILVGAGMTFI. The Extracellular portion of the chain corresponds to 429–485; that stretch reads VQSSSVFTSALTPLIGIGVITIERAYPLTLGSNIGTTTTAILAALASPGNALRSSLQ. A helical membrane pass occupies residues 486 to 506; that stretch reads IALCHFFFNISGILLWYPIPF. At 507-525 the chain is on the cytoplasmic side; that stretch reads TRLPIRMAKGLGNISAKYR. A helical transmembrane segment spans residues 526-546; it reads WFAVFYLIIFFFLIPLTVFGL. Residues 547–552 lie on the Extracellular side of the membrane; sequence SLAGWR. The helical transmembrane segment at 553–573 threads the bilayer; the sequence is VLVGVGVPVVFIIILVLCLRL. The Cytoplasmic portion of the chain corresponds to 574 to 687; the sequence is LQSRCPRVLP…PASDSKTECT (114 aa).

The protein belongs to the SLC34A transporter family.

Its subcellular location is the apical cell membrane. It carries out the reaction 3 Na(+)(out) + phosphate(out) = 3 Na(+)(in) + phosphate(in). Involved in actively transporting phosphate into cells via Na(+) cotransport. This chain is Sodium-dependent phosphate transport protein 2B (SLC34A2), found in Pongo abelii (Sumatran orangutan).